The chain runs to 1382 residues: Hepatocyte growth factor receptor (1382 aa).

An N-terminal signal peptide occupies residues 1–24 (MKAPAVLAPGILVLLFTLVQKSYG). Over 25-935 (ECKEALVKSE…VQPDQNFTGL (911 aa)) the chain is Extracellular. The Sema domain maps to 27-516 (KEALVKSEMN…TGKKITRIPL (490 aa)). Asn45 is a glycosylation site (N-linked (GlcNAc...) asparagine). Cystine bridges form between Cys95/Cys101, Cys98/Cys160, Cys133/Cys141, and Cys173/Cys176. N-linked (GlcNAc...) asparagine glycosylation is present at Asn106. N-linked (GlcNAc...) asparagine glycosylation is found at Asn203 and Asn359. 2 cysteine pairs are disulfide-bonded: Cys299–Cys364 and Cys386–Cys398. N-linked (GlcNAc...) asparagine glycosylation is found at Asn400 and Asn406. 4 disulfides stabilise this stretch: Cys521-Cys539, Cys527-Cys562, Cys530-Cys546, and Cys542-Cys552. IPT/TIG domains lie at 564–656 (PAIY…FSYV), 658–740 (PIIT…FSYQ), and 743–837 (PIVY…LIYV). Residue Thr583 is glycosylated (O-linked (Man) threonine). Asn608 and Asn636 each carry an N-linked (GlcNAc...) asparagine glycan. Residues Thr677 and Thr762 are each glycosylated (O-linked (Man) threonine). 3 N-linked (GlcNAc...) asparagine glycosylation sites follow: Asn786, Asn880, and Asn931. A helical transmembrane segment spans residues 936-956 (IAGVISISTIVLLLLGLFLWL). At 957-1379 (KRKKQIKDLG…LSSQDNIDGE (423 aa)) the chain is on the cytoplasmic side. Ser967 is subject to Phosphoserine. Thr978 is modified (phosphothreonine). Residues Ser991, Ser998, and Ser1001 each carry the phosphoserine modification. Tyr1004 is modified (phosphotyrosine). Positions 1079–1346 (VHFNEVIGRG…RISAIFSTFI (268 aa)) constitute a Protein kinase domain. ATP-binding positions include 1085–1093 (IGRGHFGCV) and Lys1111. Asp1205 (proton acceptor) is an active-site residue. The interaction with RANBP9 stretch occupies residues 1213 to 1382 (LDEKFTVKVA…QDNIDGEGDT (170 aa)). A Phosphotyrosine modification is found at Tyr1231. Phosphotyrosine; by autocatalysis occurs at positions 1235 and 1236. Thr1290 is subject to Phosphothreonine. The interval 1321–1360 (WHPRAELRPSFSELVSRISAIFSTFIGEHYVHVNATYVNV) is interaction with MUC20. 2 positions are modified to phosphotyrosine; by autocatalysis: Tyr1350 and Tyr1357. Tyr1366 carries the post-translational modification Phosphotyrosine.

Belongs to the protein kinase superfamily. Tyr protein kinase family. In terms of assembly, heterodimer made of an alpha chain (50 kDa) and a beta chain (145 kDa) which are disulfide linked. Binds PLXNB1. Interacts when phosphorylated with downstream effectors including STAT3, PIK3R1, SRC, PCLG1, GRB2 and GAB1. Interacts with SPSB1, SPSB2 and SPSB4. Interacts with INPP5D/SHIP1. When phosphorylated at Tyr-1357, interacts with INPPL1/SHIP2. Interacts with RANBP9 and RANBP10, as well as SPSB1, SPSB2, SPSB3 and SPSB4. SPSB1 binding occurs in the presence and in the absence of HGF, however HGF treatment has a positive effect on this interaction. Interacts with MUC20; prevents interaction with GRB2 and suppresses hepatocyte growth factor-induced cell proliferation. Interacts with GRB10. Interacts with PTPN1 and PTPN2. Interacts with HSP90AA1 and HSP90AB1; the interaction suppresses MET kinase activity. Interacts with tensin TNS3. Interacts (when phosphorylated) with tensin TNS4 (via SH2 domain); the interaction increases MET protein stability by inhibiting MET endocytosis and subsequent lysosomal degradation. (Microbial infection) Interacts with L.monocytogenes InlB. InlB probably dimerizes upon binding to MET, which encourages subsequent dimerization of MET. Post-translationally, autophosphorylated in response to ligand binding on Tyr-1235 and Tyr-1236 in the kinase domain leading to further phosphorylation of Tyr-1350 and Tyr-1357 in the C-terminal multifunctional docking site. Dephosphorylated by PTPRJ at Tyr-1350 and Tyr-1366. Dephosphorylated by PTPN1 and PTPN2. In terms of processing, ubiquitinated. Ubiquitination by CBL regulates the receptor stability and activity through proteasomal degradation. (Microbial infection) Tyrosine phosphorylation is stimulated by L.monocytogenes InlB. Post-translationally, O-mannosylation of IPT/TIG domains by TMEM260 is required for protein maturation. O-mannosylated residues are composed of single mannose glycans that are not elongated or modified.

The protein localises to the membrane. It catalyses the reaction L-tyrosyl-[protein] + ATP = O-phospho-L-tyrosyl-[protein] + ADP + H(+). Its activity is regulated as follows. In its inactive state, the C-terminal tail interacts with the catalytic domain and inhibits the kinase activity. Upon ligand binding, the C-terminal tail is displaced and becomes phosphorylated, thus increasing the kinase activity. Receptor tyrosine kinase that transduces signals from the extracellular matrix into the cytoplasm by binding to hepatocyte growth factor/HGF ligand. Regulates many physiological processes including proliferation, scattering, morphogenesis and survival. Ligand binding at the cell surface induces autophosphorylation of MET on its intracellular domain that provides docking sites for downstream signaling molecules. Following activation by ligand, interacts with the PI3-kinase subunit PIK3R1, PLCG1, SRC, GRB2, STAT3 or the adapter GAB1. Recruitment of these downstream effectors by MET leads to the activation of several signaling cascades including the RAS-ERK, PI3 kinase-AKT, or PLCgamma-PKC. The RAS-ERK activation is associated with the morphogenetic effects while PI3K/AKT coordinates prosurvival effects. During embryonic development, MET signaling plays a role in gastrulation, development and migration of muscles and neuronal precursors, angiogenesis and kidney formation. In adults, participates in wound healing as well as organ regeneration and tissue remodeling. Also promotes differentiation and proliferation of hematopoietic cells. In terms of biological role, (Microbial infection) Acts as a receptor for Listeria monocytogenes internalin InlB, mediating entry of the pathogen into cells. In Canis lupus familiaris (Dog), this protein is Hepatocyte growth factor receptor (MET).